Consider the following 313-residue polypeptide: B3 domain-containing protein At2g31720 (313 aa).

The segment at 80 to 110 is disordered; that stretch reads KNQDPEQNPNRVASSPSSCHLESKRPQKVVS. The segment covering 84–99 has biased composition (polar residues); that stretch reads PEQNPNRVASSPSSCH. The TF-B3 DNA-binding region spans 169-267; that stretch reads WKQILDMDFL…MLFFAFVLSD (99 aa).

It localises to the nucleus. The chain is B3 domain-containing protein At2g31720 (ARF70) from Arabidopsis thaliana (Mouse-ear cress).